The chain runs to 359 residues: Histidinol-phosphate aminotransferase (359 aa).

Lys212 is subject to N6-(pyridoxal phosphate)lysine.

It belongs to the class-II pyridoxal-phosphate-dependent aminotransferase family. Histidinol-phosphate aminotransferase subfamily. As to quaternary structure, homodimer. Requires pyridoxal 5'-phosphate as cofactor.

The enzyme catalyses L-histidinol phosphate + 2-oxoglutarate = 3-(imidazol-4-yl)-2-oxopropyl phosphate + L-glutamate. It functions in the pathway amino-acid biosynthesis; L-histidine biosynthesis; L-histidine from 5-phospho-alpha-D-ribose 1-diphosphate: step 7/9. The sequence is that of Histidinol-phosphate aminotransferase from Buchnera aphidicola subsp. Schlechtendalia chinensis.